The following is a 443-amino-acid chain: Thymidine phosphorylase (443 aa).

Belongs to the thymidine/pyrimidine-nucleoside phosphorylase family. As to quaternary structure, homodimer.

The catalysed reaction is thymidine + phosphate = 2-deoxy-alpha-D-ribose 1-phosphate + thymine. The protein operates within pyrimidine metabolism; dTMP biosynthesis via salvage pathway; dTMP from thymine: step 1/2. Its function is as follows. The enzymes which catalyze the reversible phosphorolysis of pyrimidine nucleosides are involved in the degradation of these compounds and in their utilization as carbon and energy sources, or in the rescue of pyrimidine bases for nucleotide synthesis. The polypeptide is Thymidine phosphorylase (Shewanella halifaxensis (strain HAW-EB4)).